A 271-amino-acid polypeptide reads, in one-letter code: Dermonecrotic toxin SpeSicTox-betaIF1 (271 aa).

The active site involves His3. 2 residues coordinate Mg(2+): Glu23 and Asp25. The active-site Nucleophile is His39. Disulfide bonds link Cys43–Cys49 and Cys45–Cys188. Position 83 (Asp83) interacts with Mg(2+).

It belongs to the arthropod phospholipase D family. Class II subfamily. Mg(2+) serves as cofactor. As to expression, expressed by the venom gland.

The protein resides in the secreted. The catalysed reaction is an N-(acyl)-sphingosylphosphocholine = an N-(acyl)-sphingosyl-1,3-cyclic phosphate + choline. It carries out the reaction an N-(acyl)-sphingosylphosphoethanolamine = an N-(acyl)-sphingosyl-1,3-cyclic phosphate + ethanolamine. The enzyme catalyses a 1-acyl-sn-glycero-3-phosphocholine = a 1-acyl-sn-glycero-2,3-cyclic phosphate + choline. It catalyses the reaction a 1-acyl-sn-glycero-3-phosphoethanolamine = a 1-acyl-sn-glycero-2,3-cyclic phosphate + ethanolamine. Its function is as follows. Dermonecrotic toxins cleave the phosphodiester linkage between the phosphate and headgroup of certain phospholipids (sphingolipid and lysolipid substrates), forming an alcohol (often choline) and a cyclic phosphate. This toxin acts on sphingomyelin (SM). It may also act on ceramide phosphoethanolamine (CPE), lysophosphatidylcholine (LPC) and lysophosphatidylethanolamine (LPE), but not on lysophosphatidylserine (LPS), and lysophosphatidylglycerol (LPG). It acts by transphosphatidylation, releasing exclusively cyclic phosphate products as second products. Induces dermonecrosis, hemolysis, increased vascular permeability, edema, inflammatory response, and platelet aggregation. The sequence is that of Dermonecrotic toxin SpeSicTox-betaIF1 from Sicarius peruensis (Six-eyed sand spider).